A 385-amino-acid chain; its full sequence is MSKGASAPQQQSAFKQLYTELFNNEGDFSKVSSNLKKPLKCYVKESYPHFLVTDGYFFVAPYFTKEAVNEFHAKFPNVNIVDLTDKVIVINNWSLELRRVNSAEVFTSYANLEARLIVHSFKPNLQERLNPTRYPVNLFRDDEFKTTIQHFRHTALQAAINKTVKGDNLVDISKVADAAGKKGKVDAGIVKASASKGDEFSDFSFKEGNTATLKIADIFVQEKGKDALNKAADHTDGAKVKGGAKGKGKAAAKAAKGKKLSAKKGDSSAADVRKSVDKIVKYTPSKGSRKDTPQKSQAPAAGKSSAKKGGKKAVPSAPSPSGKKSALTTDKMTMAQFVKYLDWHEKKKGGKVSSGGKVLGKRSAGKASATSGKASKASKKTAAKK.

Disordered stretches follow at residues 231–329 (AADH…ALTT) and 343–385 (WHEK…AAKK). Residues 242–262 (GGAKGKGKAAAKAAKGKKLSA) show a composition bias toward basic residues. The segment covering 263-280 (KKGDSSAADVRKSVDKIV) has biased composition (basic and acidic residues). Low complexity-rich tracts occupy residues 295-304 (KSQAPAAGKS), 312-326 (KAVP…KKSA), and 365-375 (GKASATSGKAS). Residues 376 to 385 (KASKKTAAKK) show a composition bias toward basic residues.

Heterodimer of an alpha and a beta subunit.

Its subcellular location is the nucleus. It localises to the chromosome. The protein localises to the telomere. May function as protective capping of the single-stranded telomeric overhang. May also participate in telomere length regulation during DNA replication. Binds specifically to the T4G4-containing extension on the 3'strand and protects this region of the telomere from nuclease digestion and chemical modification. This chain is Telomere-binding protein subunit beta (MAC-41A), found in Sterkiella nova (Ciliate).